Here is a 353-residue protein sequence, read N- to C-terminus: Photosystem II protein D1 (353 aa).

Residue Thr2 is modified to N-acetylthreonine. Thr2 is subject to Phosphothreonine. 3 helical membrane-spanning segments follow: residues 29-46 (YIGWFGVLMIPTLLTATS), 118-133 (HFLLGVACYMGREWEL), and 142-156 (WIAVAYSAPVAAATA). Position 118 (His118) interacts with chlorophyll a. A pheophytin a-binding site is contributed by Tyr126. Residues Asp170 and Glu189 each coordinate [CaMn4O5] cluster. Residues 197–218 (FHMLGVAGVFGGSLFSAMHGSL) form a helical membrane-spanning segment. His198 is a binding site for chlorophyll a. A quinone-binding positions include His215 and 264-265 (SF). His215 lines the Fe cation pocket. His272 contacts Fe cation. The helical transmembrane segment at 274–288 (FLAAWPVIGIWFTAL) threads the bilayer. Positions 332, 333, 342, and 344 each coordinate [CaMn4O5] cluster. Positions 345–353 (AVEAPSTNG) are excised as a propeptide.

This sequence belongs to the reaction center PufL/M/PsbA/D family. In terms of assembly, PSII is composed of 1 copy each of membrane proteins PsbA, PsbB, PsbC, PsbD, PsbE, PsbF, PsbH, PsbI, PsbJ, PsbK, PsbL, PsbM, PsbT, PsbX, PsbY, PsbZ, Psb30/Ycf12, at least 3 peripheral proteins of the oxygen-evolving complex and a large number of cofactors. It forms dimeric complexes. Requires The D1/D2 heterodimer binds P680, chlorophylls that are the primary electron donor of PSII, and subsequent electron acceptors. It shares a non-heme iron and each subunit binds pheophytin, quinone, additional chlorophylls, carotenoids and lipids. D1 provides most of the ligands for the Mn4-Ca-O5 cluster of the oxygen-evolving complex (OEC). There is also a Cl(-1) ion associated with D1 and D2, which is required for oxygen evolution. The PSII complex binds additional chlorophylls, carotenoids and specific lipids. as cofactor. Tyr-161 forms a radical intermediate that is referred to as redox-active TyrZ, YZ or Y-Z. Post-translationally, C-terminally processed by CTPA; processing is essential to allow assembly of the oxygen-evolving complex and thus photosynthetic growth.

The protein localises to the plastid. It is found in the chloroplast thylakoid membrane. The enzyme catalyses 2 a plastoquinone + 4 hnu + 2 H2O = 2 a plastoquinol + O2. In terms of biological role, photosystem II (PSII) is a light-driven water:plastoquinone oxidoreductase that uses light energy to abstract electrons from H(2)O, generating O(2) and a proton gradient subsequently used for ATP formation. It consists of a core antenna complex that captures photons, and an electron transfer chain that converts photonic excitation into a charge separation. The D1/D2 (PsbA/PsbD) reaction center heterodimer binds P680, the primary electron donor of PSII as well as several subsequent electron acceptors. The sequence is that of Photosystem II protein D1 from Buxus microphylla (Littleleaf boxwood).